Consider the following 102-residue polypeptide: MNGIPMEHGLLLAAILFCIGLCGLLIRRNLLFILMSIEIMMNASALAFVVAGSRWAQADGQIMYILVISLAAAEASIGLALLLLLYRRYHTLNVDTVSEMRG.

3 helical membrane-spanning segments follow: residues 6–26 (MEHGLLLAAILFCIGLCGLLI), 30–50 (LLFILMSIEIMMNASALAFVV), and 65–85 (ILVISLAAAEASIGLALLLLL).

This sequence belongs to the complex I subunit 4L family. NDH-1 is composed of 14 different subunits. Subunits NuoA, H, J, K, L, M, N constitute the membrane sector of the complex.

It localises to the cell inner membrane. The enzyme catalyses a quinone + NADH + 5 H(+)(in) = a quinol + NAD(+) + 4 H(+)(out). NDH-1 shuttles electrons from NADH, via FMN and iron-sulfur (Fe-S) centers, to quinones in the respiratory chain. The immediate electron acceptor for the enzyme in this species is believed to be ubiquinone. Couples the redox reaction to proton translocation (for every two electrons transferred, four hydrogen ions are translocated across the cytoplasmic membrane), and thus conserves the redox energy in a proton gradient. This Aeromonas salmonicida (strain A449) protein is NADH-quinone oxidoreductase subunit K.